The following is a 68-amino-acid chain: Protein SlyX homolog (68 aa).

Belongs to the SlyX family.

This is Protein SlyX homolog from Pseudomonas fluorescens (strain Pf0-1).